The sequence spans 305 residues: MNRLFKTIIENNRKWVSEGKVASYIPELSKMDKNLLGISVCTLGGEEYWEGDAEVKFTIQSISKIVTLMLAIIDNGEDYVFSKVGMEPTETAFNSIVNLEAKESHKPINPMINAGAIVVASMVAGKDSDEKFDRILKFTRKISGNNNIDINLNVYKSEKETGHRNRALAYFMKSTGALKGNVEEILDVYFKQCSIEITCKDLARIGVMLANDGVSPYTGDRIVPRHVARIVKTIMVTCGMYDASGNFAVHIGIPAKSGVGGGIVACAPRRMGIGVLGTALDEKGNSIAGTKILEELSKQLDLSIF.

Substrate contacts are provided by serine 61, asparagine 113, glutamate 158, asparagine 165, tyrosine 189, tyrosine 241, and valine 259.

This sequence belongs to the glutaminase family. In terms of assembly, homotetramer.

The enzyme catalyses L-glutamine + H2O = L-glutamate + NH4(+). The chain is Glutaminase from Clostridium botulinum (strain 657 / Type Ba4).